A 299-amino-acid polypeptide reads, in one-letter code: Probable lipid kinase YegS (299 aa).

Residues 2-133 (AEFPASLLIL…IDMAQVNKQT (132 aa)) enclose the DAGKc domain. ATP contacts are provided by residues T40, 66–72 (GDGTINE), and T95. Mg(2+) is bound by residues L215, D218, and L220. The active-site Proton acceptor is E271.

This sequence belongs to the diacylglycerol/lipid kinase family. YegS lipid kinase subfamily. It depends on Mg(2+) as a cofactor. Requires Ca(2+) as cofactor.

The protein resides in the cytoplasm. Its function is as follows. Probably phosphorylates lipids; the in vivo substrate is unknown. This Escherichia coli O45:K1 (strain S88 / ExPEC) protein is Probable lipid kinase YegS.